The chain runs to 427 residues: Vitamin D3 receptor (427 aa).

The segment at residues 21 to 96 is a DNA-binding region (nuclear receptor); it reads PRICGVCGDR…IGMMKEFILT (76 aa). The Zn(2+) site is built by Cys24, Cys27, Cys41, Cys44, Cys60, Cys66, Cys76, and Cys79. NR C4-type zinc fingers lie at residues 24-44 and 60-84; these read CGVC…CEGC and CPFN…LKRC. Positions 97-126 are hinge; it reads DEEVQRKREMILKRKEEEALKDSLRPKLSE. Positions 127–423 constitute an NR LBD domain; that stretch reads EQQRIIAILL…LTPLVLEVFG (297 aa). Tyr143 lines the calcitriol pocket. The tract at residues 158 to 183 is disordered; it reads RVNDGGGSHPSRPNSRHTPSFSGDSS. Ser237 is a binding site for calcitriol. The interaction with coactivator LXXLL motif stretch occupies residues 246-264; sequence KMIPGFRDLTSEDQIVLLK. Residues Arg274, Ser278, His305, and His397 each coordinate calcitriol. Residues 416 to 424 carry the 9aaTAD motif; sequence PLVLEVFGN.

This sequence belongs to the nuclear hormone receptor family. NR1 subfamily. In terms of assembly, homodimer in the absence of bound vitamin D3. Heterodimer with RXRA after vitamin D3 binding. Interacts with MED1, NCOA1, NCOA2, NCOA3 and NCOA6 coactivators, leading to a strong increase of transcription of target genes. Interacts with the corepressor NCOR1. Interacts with SNW1. Interacts with IRX4, the interaction does not affect its transactivation activity. Ubiquitinated by UBR5, leading to its degradation: UBR5 specifically recognizes and binds ligand-bound VDR when it is not associated with coactivators (NCOAs). In presence of NCOAs, the UBR5-degron is not accessible, preventing its ubiquitination and degradation.

The protein resides in the nucleus. The protein localises to the cytoplasm. In terms of biological role, nuclear receptor for calcitriol, the active form of vitamin D3 which mediates the action of this vitamin on cells. Enters the nucleus upon vitamin D3 binding where it forms heterodimers with the retinoid X receptor/RXR. The VDR-RXR heterodimers bind to specific response elements on DNA and activate the transcription of vitamin D3-responsive target genes. Plays a central role in calcium homeostasis. In Saguinus oedipus (Cotton-top tamarin), this protein is Vitamin D3 receptor (VDR).